We begin with the raw amino-acid sequence, 284 residues long: 2-dehydro-3-deoxyphosphooctonate aldolase (284 aa).

It belongs to the KdsA family.

The protein localises to the cytoplasm. It carries out the reaction D-arabinose 5-phosphate + phosphoenolpyruvate + H2O = 3-deoxy-alpha-D-manno-2-octulosonate-8-phosphate + phosphate. It functions in the pathway carbohydrate biosynthesis; 3-deoxy-D-manno-octulosonate biosynthesis; 3-deoxy-D-manno-octulosonate from D-ribulose 5-phosphate: step 2/3. The protein operates within bacterial outer membrane biogenesis; lipopolysaccharide biosynthesis. The sequence is that of 2-dehydro-3-deoxyphosphooctonate aldolase from Aliivibrio salmonicida (strain LFI1238) (Vibrio salmonicida (strain LFI1238)).